We begin with the raw amino-acid sequence, 354 residues long: Thiamine thiazole synthase (354 aa).

Substrate contacts are provided by residues alanine 83, 104–105, glycine 112, and valine 177; that span reads EA. Residue cysteine 210 is modified to 2,3-didehydroalanine (Cys). Residues aspartate 212, histidine 227, methionine 305, and 315–317 each bind substrate; that span reads RMG.

This sequence belongs to the THI4 family. Homooctamer. It depends on Fe cation as a cofactor. In terms of processing, during the catalytic reaction, a sulfide is transferred from Cys-210 to a reaction intermediate, generating a dehydroalanine residue.

Its subcellular location is the cytoplasm. It is found in the nucleus. It carries out the reaction [ADP-thiazole synthase]-L-cysteine + glycine + NAD(+) = [ADP-thiazole synthase]-dehydroalanine + ADP-5-ethyl-4-methylthiazole-2-carboxylate + nicotinamide + 3 H2O + 2 H(+). Involved in biosynthesis of the thiamine precursor thiazole. Catalyzes the conversion of NAD and glycine to adenosine diphosphate 5-(2-hydroxyethyl)-4-methylthiazole-2-carboxylic acid (ADT), an adenylated thiazole intermediate. The reaction includes an iron-dependent sulfide transfer from a conserved cysteine residue of the protein to a thiazole intermediate. The enzyme can only undergo a single turnover, which suggests it is a suicide enzyme. May have additional roles in adaptation to various stress conditions and in DNA damage tolerance. In Candida albicans (strain SC5314 / ATCC MYA-2876) (Yeast), this protein is Thiamine thiazole synthase.